The sequence spans 366 residues: Phospho-N-acetylmuramoyl-pentapeptide-transferase (366 aa).

10 consecutive transmembrane segments (helical) span residues 27–47, 71–91, 93–113, 138–158, 174–194, 205–225, 245–265, 268–288, 297–317, and 343–363; these read AALF…IASL, TPTM…LLWA, LSSI…AIGF, FVIA…AGAA, LMLN…VGAG, GLAI…AYLA, LAVI…FNAP, AIFM…TVAV, IIIG…VFWF, and QVVI…LSTL.

The protein belongs to the glycosyltransferase 4 family. MraY subfamily. Mg(2+) serves as cofactor.

It is found in the cell inner membrane. The enzyme catalyses UDP-N-acetyl-alpha-D-muramoyl-L-alanyl-gamma-D-glutamyl-meso-2,6-diaminopimeloyl-D-alanyl-D-alanine + di-trans,octa-cis-undecaprenyl phosphate = di-trans,octa-cis-undecaprenyl diphospho-N-acetyl-alpha-D-muramoyl-L-alanyl-D-glutamyl-meso-2,6-diaminopimeloyl-D-alanyl-D-alanine + UMP. It functions in the pathway cell wall biogenesis; peptidoglycan biosynthesis. Catalyzes the initial step of the lipid cycle reactions in the biosynthesis of the cell wall peptidoglycan: transfers peptidoglycan precursor phospho-MurNAc-pentapeptide from UDP-MurNAc-pentapeptide onto the lipid carrier undecaprenyl phosphate, yielding undecaprenyl-pyrophosphoryl-MurNAc-pentapeptide, known as lipid I. The sequence is that of Phospho-N-acetylmuramoyl-pentapeptide-transferase from Rhizobium meliloti (strain 1021) (Ensifer meliloti).